Reading from the N-terminus, the 315-residue chain is Olfactory receptor 10A4 (315 aa).

Over 1 to 26 (MMWENWTIVSEFVLVSFSALSTELQA) the chain is Extracellular. Asn5 is a glycosylation site (N-linked (GlcNAc...) asparagine). A helical membrane pass occupies residues 27–47 (LLFLLFLTIYLVTLMGNVLII). At 48-55 (LVTIADSA) the chain is on the cytoplasmic side. A helical transmembrane segment spans residues 56-76 (LQSPMYFFLRNLSFLEIGFNL). Residues 77–100 (VIVPKMLGTLIIQDTTISFLGCAT) are Extracellular-facing. Residues Cys98 and Cys190 are joined by a disulfide bond. The helical transmembrane segment at 101–121 (QMYFFFFFGAAECCLLATMAY) threads the bilayer. Topologically, residues 122-140 (DRYVAICDPLHYPVIMGHI) are cytoplasmic. A helical membrane pass occupies residues 141 to 161 (SCAQLAAASWFSGFSVATVQT). Topologically, residues 162-198 (TWIFSFPFCGPNRVNHFFCDSPPVIALVCADTSVFEL) are extracellular. A helical membrane pass occupies residues 199–218 (EALTATVLFILFPFLLILGS). At 219–238 (YVRILSTIFRMPSAEGKHQA) the chain is on the cytoplasmic side. The helical transmembrane segment at 239-259 (FSTCSAHLLVVSLFYSTAILT) threads the bilayer. Over 260–272 (YFRPQSSASSESK) the chain is Extracellular. Residues 273–293 (KLLSLSSTVVTPMLNPIIYSS) form a helical membrane-spanning segment. Topologically, residues 294-315 (RNKEVKAALKRLIHRTLGSQKL) are cytoplasmic.

Belongs to the G-protein coupled receptor 1 family. As to expression, expressed in the tongue.

The protein resides in the cell membrane. Odorant receptor (Potential). May be involved in taste perception. This Homo sapiens (Human) protein is Olfactory receptor 10A4 (OR10A4).